The primary structure comprises 442 residues: Chromosomal replication initiator protein DnaA (442 aa).

Residues 1-75 (MDAWPRCLER…GNGEVALAVG (75 aa)) are domain I, interacts with DnaA modulators. Residues 75–104 (GSRPRAPEPAPAPVAATIAPQAAPIAPFAG) form a domain II region. Residues 105–322 (NLDSHYTFAN…GALNTLVARA (218 aa)) are domain III, AAA+ region. Residues Gly-150, Gly-152, Lys-153, and Thr-154 each coordinate ATP. Positions 323–442 (NFTGRSITVE…WEKLIRKLSE (120 aa)) are domain IV, binds dsDNA.

It belongs to the DnaA family. As to quaternary structure, oligomerizes as a right-handed, spiral filament on DNA at oriC.

It localises to the cytoplasm. Functionally, plays an essential role in the initiation and regulation of chromosomal replication. ATP-DnaA binds to the origin of replication (oriC) to initiate formation of the DNA replication initiation complex once per cell cycle. Binds the DnaA box (a 9 base pair repeat at the origin) and separates the double-stranded (ds)DNA. Forms a right-handed helical filament on oriC DNA; dsDNA binds to the exterior of the filament while single-stranded (ss)DNA is stabiized in the filament's interior. The ATP-DnaA-oriC complex binds and stabilizes one strand of the AT-rich DNA unwinding element (DUE), permitting loading of DNA polymerase. After initiation quickly degrades to an ADP-DnaA complex that is not apt for DNA replication. Binds acidic phospholipids. The sequence is that of Chromosomal replication initiator protein DnaA from Xanthomonas oryzae pv. oryzae (strain PXO99A).